The following is a 130-amino-acid chain: Small ribosomal subunit protein uS8 (130 aa).

Belongs to the universal ribosomal protein uS8 family. In terms of assembly, part of the 30S ribosomal subunit. Contacts proteins S5 and S12.

One of the primary rRNA binding proteins, it binds directly to 16S rRNA central domain where it helps coordinate assembly of the platform of the 30S subunit. In Shewanella loihica (strain ATCC BAA-1088 / PV-4), this protein is Small ribosomal subunit protein uS8.